Consider the following 458-residue polypeptide: Tyrosine phenol-lyase (458 aa).

An N6-(pyridoxal phosphate)lysine modification is found at lysine 258.

Belongs to the beta-eliminating lyase family. Homotetramer. It depends on pyridoxal 5'-phosphate as a cofactor.

The catalysed reaction is L-tyrosine + H2O = phenol + pyruvate + NH4(+). This Symbiobacterium sp. (strain SC-1) protein is Tyrosine phenol-lyase (tpl).